A 61-amino-acid polypeptide reads, in one-letter code: Venom protein 22.1 (61 aa).

The N-terminal stretch at 1 to 18 is a signal peptide; that stretch reads MDIKGLLVILFFVLLITG.

It belongs to the non-disulfide-bridged peptide (NDBP) superfamily. Long chain multifunctional peptide (group 2) family. As to expression, expressed by the venom gland.

The protein localises to the secreted. This is Venom protein 22.1 from Lychas mucronatus (Chinese swimming scorpion).